Here is a 765-residue protein sequence, read N- to C-terminus: Transcription factor SKN7 (765 aa).

Residues 1-42 (MPPTNGEGGSQQPQQQQQQQQQQQQQQQQQQQQQQGGSGSSD) are disordered. Residues 11-35 (QQPQQQQQQQQQQQQQQQQQQQQQQ) are compositionally biased toward low complexity. Residues 40–145 (SSDFVRKLYK…NLDNIRRKAP (106 aa)) form a DNA-binding domain region. A coiled-coil region spans residues 157–198 (FNASQQQIAALSESLQATQQQLQALQQQCYELEKTNRLLVSE). Residues 160-220 (SQQQIAALSE…QASNEIINHL (61 aa)) are hydrophobic repeat HR-A/B. A disordered region spans residues 371–391 (SSSQITPSQITPPPKDQMSSM). The region spanning 398–514 (RVLLVEDDKT…NMSRLLRRHL (117 aa)) is the Response regulatory domain. Aspartate 449 carries the 4-aspartylphosphate modification. The interval 542–765 (TAGPATTGVG…PGVGVAGFVQ (224 aa)) is transactivation domain. The segment covering 550–564 (VGVGVAGAPSGGAHG) has biased composition (gly residues). Disordered stretches follow at residues 550 to 647 (VGVG…PAGL) and 686 to 765 (PGAM…GFVQ). Low complexity predominate over residues 569 to 584 (AQHQQGYAMAPPTTMQ). Residues 626-636 (QPPPPPTPTQP) show a composition bias toward pro residues. Composition is skewed to low complexity over residues 637 to 647 (SPTSAAPPAGL) and 699 to 715 (GVGH…AGAR). Residues 755 to 765 (HPGVGVAGFVQ) are compositionally biased toward gly residues.

It belongs to the SKN7 family. In terms of assembly, homotrimer.

It localises to the nucleus. In terms of biological role, transcription factor that is part of a SLN1-YPD1-SKN7 two-component regulatory system, which controls gene expression in response to changes in the osmolarity of the extracellular environment. Under low osmotic conditions, phosphorylated and activated by the phosphorelay intermediate protein YPD1. Also activated in response to oxidative stress, independent on the two-component regulatory system. Regulates heat shock genes in response to oxidative stress and genes involved in cell wall integrity in response to osmotic changes. This Chaetomium thermophilum (strain DSM 1495 / CBS 144.50 / IMI 039719) (Thermochaetoides thermophila) protein is Transcription factor SKN7.